Reading from the N-terminus, the 200-residue chain is NAD(P)H dehydrogenase (quinone) (200 aa).

The Flavodoxin-like domain maps to 4-190 (VLVLYYSTYG…DGARFQGRLV (187 aa)). FMN contacts are provided by residues 10–15 (STYGHL) and 78–80 (TRF). An NAD(+)-binding site is contributed by tyrosine 12. Tryptophan 98 contacts substrate. FMN-binding positions include 113–119 (STATQHG) and histidine 134.

This sequence belongs to the WrbA family. It depends on FMN as a cofactor.

The enzyme catalyses a quinone + NADH + H(+) = a quinol + NAD(+). It carries out the reaction a quinone + NADPH + H(+) = a quinol + NADP(+). The sequence is that of NAD(P)H dehydrogenase (quinone) from Acidovorax ebreus (strain TPSY) (Diaphorobacter sp. (strain TPSY)).